The following is a 1561-amino-acid chain: Adhesion G protein-coupled receptor B2 (1561 aa).

The N-terminal stretch at methionine 1–alanine 20 is a signal peptide. The Extracellular portion of the chain corresponds to phenylalanine 21–leucine 930. N-linked (GlcNAc...) asparagine glycosylation is found at asparagine 94, asparagine 182, and asparagine 183. O-linked (Xyl...) (chondroitin sulfate) serine glycosylation occurs at serine 257. TSP type-1 domains are found at residues aspartate 300–proline 353, histidine 355–proline 408, glutamate 410–proline 463, and aspartate 466–proline 519. 14 disulfides stabilise this stretch: cysteine 312/cysteine 346, cysteine 316/cysteine 352, cysteine 327/cysteine 336, cysteine 367/cysteine 402, cysteine 371/cysteine 407, cysteine 382/cysteine 392, cysteine 422/cysteine 457, cysteine 426/cysteine 462, cysteine 437/cysteine 447, cysteine 478/cysteine 513, cysteine 482/cysteine 518, cysteine 493/cysteine 503, cysteine 525/cysteine 560, and cysteine 548/cysteine 578. A glycan (N-linked (GlcNAc...) asparagine) is linked at asparagine 347. A glycan (N-linked (GlcNAc...) asparagine) is linked at asparagine 428. Residues asparagine 551 and asparagine 636 are each glycosylated (N-linked (GlcNAc...) asparagine). Residues aspartate 748–leucine 918 enclose the GAIN-B domain. Positions leucine 757–leucine 797 are disordered. Over residues serine 760–serine 775 the composition is skewed to low complexity. Asparagine 861 is a glycosylation site (N-linked (GlcNAc...) asparagine). 2 disulfide bridges follow: cysteine 868-cysteine 900 and cysteine 888-cysteine 902. Residues cysteine 868–leucine 918 form a GPS region. A helical transmembrane segment spans residues valine 931–phenylalanine 951. Residues tryptophan 952–arginine 959 are Cytoplasmic-facing. Residues serine 960–glycine 980 traverse the membrane as a helical segment. Topologically, residues glutamine 981–glycine 988 are extracellular. Residues valine 989–leucine 1009 form a helical membrane-spanning segment. Over threonine 1010 to lysine 1030 the chain is Cytoplasmic. The chain crosses the membrane as a helical span at residues arginine 1031–threonine 1051. Over arginine 1052–tyrosine 1072 the chain is Extracellular. Residues alanine 1073–phenylalanine 1093 form a helical membrane-spanning segment. The Cytoplasmic segment spans residues asparagine 1094 to arginine 1115. Residues cysteine 1116–leucine 1136 traverse the membrane as a helical segment. The Extracellular segment spans residues serine 1137–serine 1147. The chain crosses the membrane as a helical span at residues leucine 1148–alanine 1168. At methionine 1169–valine 1561 the chain is on the cytoplasmic side. Tyrosine 1345 is modified (phosphotyrosine). 3 disordered regions span residues leucine 1355–arginine 1377, phenylalanine 1417–threonine 1447, and arginine 1491–valine 1561. Residues glutamate 1366–proline 1376 show a composition bias toward basic and acidic residues. Residues arginine 1491 to proline 1502 show a composition bias toward basic and acidic residues. Residues serine 1519 to leucine 1528 are compositionally biased toward polar residues. Residues glutamate 1551–valine 1561 show a composition bias toward acidic residues.

This sequence belongs to the G-protein coupled receptor 2 family. Adhesion G-protein coupled receptor (ADGR) subfamily. As to quaternary structure, heterodimer of 2 chains generated by proteolytic processing; the large extracellular N-terminal fragment and the membrane-bound C-terminal fragment predominantly remain associated and non-covalently linked. Interacts with GABPB2. Interacts (via carboxy-terminus) with TAX1BP3. Interacts with GNAZ. Interacts with SH3GL2. In terms of processing, glycosylated. Post-translationally, autoproteolytically processed at the GPS region of the GAIN-B domain; this cleavage modulates receptor activity. Additionally, furin is involved in the cleavage at another site, in the middle of the extracellular domain, generating a soluble fragment. In terms of tissue distribution, specifically expressed in the brain. The peak level in the brain is observed 10 days after birth.

It is found in the cell membrane. The protein resides in the secreted. With respect to regulation, receptor activity is regulated by proteolytic processing. The long N-terminal has a an inhibitory effect on the constitutive signaling activity. Removal of the N-terminal region induces an increase of the receptor activity. Its function is as follows. Orphan G-protein coupled receptor involved in cell adhesion and probably in cell-cell interactions. Activates NFAT-signaling pathway, a transcription factor, via the G-protein GNAZ. Involved in angiogenesis inhibition. In Mus musculus (Mouse), this protein is Adhesion G protein-coupled receptor B2 (Adgrb2).